Consider the following 147-residue polypeptide: PTPN13-like protein, Y-linked (147 aa).

As to expression, expressed in testis. Detected in spermatocytes, spermatids and spermatozoa (at protein level).

The polypeptide is PTPN13-like protein, Y-linked (PRY) (Homo sapiens (Human)).